We begin with the raw amino-acid sequence, 438 residues long: 5-methylthioadenosine/S-adenosylhomocysteine deaminase (438 aa).

Zn(2+)-binding residues include H66 and H68. Residues E95, R148, and H188 each contribute to the substrate site. Residue H215 coordinates Zn(2+). The substrate site is built by E218 and D305. Residue D305 coordinates Zn(2+).

This sequence belongs to the metallo-dependent hydrolases superfamily. MTA/SAH deaminase family. It depends on Zn(2+) as a cofactor.

The enzyme catalyses S-adenosyl-L-homocysteine + H2O + H(+) = S-inosyl-L-homocysteine + NH4(+). It carries out the reaction S-methyl-5'-thioadenosine + H2O + H(+) = S-methyl-5'-thioinosine + NH4(+). Functionally, catalyzes the deamination of 5-methylthioadenosine and S-adenosyl-L-homocysteine into 5-methylthioinosine and S-inosyl-L-homocysteine, respectively. Is also able to deaminate adenosine. This chain is 5-methylthioadenosine/S-adenosylhomocysteine deaminase, found in Halalkalibacterium halodurans (strain ATCC BAA-125 / DSM 18197 / FERM 7344 / JCM 9153 / C-125) (Bacillus halodurans).